The primary structure comprises 211 residues: Probable GTP-binding protein EngB (211 aa).

The EngB-type G domain maps to 21 to 197; that stretch reads TAPEFAFLGR…WGEIHRVAAE (177 aa). GTP is bound by residues 29–36, 55–59, 80–83, 147–150, and 176–178; these read GRSNVGKS, GRTRA, DLPG, TKAD, and CSA. Residues Ser-36 and Thr-57 each coordinate Mg(2+).

Belongs to the TRAFAC class TrmE-Era-EngA-EngB-Septin-like GTPase superfamily. EngB GTPase family. Requires Mg(2+) as cofactor.

Necessary for normal cell division and for the maintenance of normal septation. In Acidobacterium capsulatum (strain ATCC 51196 / DSM 11244 / BCRC 80197 / JCM 7670 / NBRC 15755 / NCIMB 13165 / 161), this protein is Probable GTP-binding protein EngB.